Here is a 485-residue protein sequence, read N- to C-terminus: Mitochondria-eating protein (485 aa).

Residues 112-210 (TSHERELNEV…SILSSESSIL (99 aa)) are a coiled coil. 2 stretches are compositionally biased toward low complexity: residues 214 to 241 (LSRS…SPTS) and 471 to 485 (RSRS…TPRF). Disordered stretches follow at residues 214–244 (LSRS…SAKL) and 451–485 (RSRS…TPRF).

Belongs to the MIEAP family.

Its subcellular location is the cytoplasm. The protein resides in the mitochondrion outer membrane. The protein localises to the mitochondrion matrix. Its function is as follows. Key regulator of mitochondrial quality that mediates the repairing or degradation of unhealthy mitochondria in response to mitochondrial damage. Mediator of mitochondrial protein catabolic process (also named MALM) by mediating the degradation of damaged proteins inside mitochondria by promoting the accumulation in the mitochondrial matrix of hydrolases that are characteristic of the lysosomal lumen. Also involved in mitochondrion degradation of damaged mitochondria by promoting the formation of vacuole-like structures (named MIV), which engulf and degrade unhealthy mitochondria by accumulating lysosomes. Binds cardiolipin. May form molecular condensates (non-membrane-bounded organelles) within mitochondria that compartmentalize and promote cardiolipin metabolism. The protein is Mitochondria-eating protein (spata18) of Xenopus laevis (African clawed frog).